Here is a 263-residue protein sequence, read N- to C-terminus: uncharacterized protein (263 aa).

Position 17–41 (17–41) interacts with NAD(+); the sequence is GGGRGLGAAIALAFAQAGADVLIAS. A substrate-binding site is contributed by S147. The active-site Proton acceptor is Y160. An NAD(+)-binding site is contributed by K164.

This sequence belongs to the short-chain dehydrogenases/reductases (SDR) family.

This is an uncharacterized protein from Mycobacterium tuberculosis (strain CDC 1551 / Oshkosh).